The primary structure comprises 69 residues: VLIIAVLFLTACQLTTAETYSRGRQKHRARRSTDKNSKWTRECTHSGGACNSHDQCCNAFCDTATRTCV.

Residues 1–17 (VLIIAVLFLTACQLTTA) form the signal peptide. Positions 18–41 (ETYSRGRQKHRARRSTDKNSKWTR) are excised as a propeptide. Cystine bridges form between Cys-43–Cys-57, Cys-50–Cys-61, and Cys-56–Cys-68.

The protein belongs to the conotoxin O1 superfamily. As to expression, expressed by the venom duct.

It is found in the secreted. The chain is Conotoxin Eb6.1 (E1) from Conus ebraeus (Hebrew cone).